Reading from the N-terminus, the 184-residue chain is MDLQAAGAQAQGAAEPSRGPPLPSARGAPPSPEAGFATADHSSQERETEKAMDRLARGTQSIPNDSPARGEGTHSEEEGFAMDEEDSDGELNTWELSEGTNCPPKEQPGDLFNEDWDSELKADQGNPYDADDIQESISQELKPWVCCAPQGDMIYDPSWHHPPPLIPYYSKMVFETGQFDDAED.

Met-1 bears the N-acetylmethionine mark. Residues 1-14 (MDLQAAGAQAQGAA) show a composition bias toward low complexity. The segment at 1-136 (MDLQAAGAQA…PYDADDIQES (136 aa)) is disordered. The span at 42–56 (SSQERETEKAMDRLA) shows a compositional bias: basic and acidic residues. Phosphoserine is present on residues Ser-66 and Ser-75. Residues 78–89 (EGFAMDEEDSDG) show a composition bias toward acidic residues.

As to quaternary structure, interacts with PRMT5. Interacts with histone H4; specifically interacts with the N-terminus of histone H4 but not with histone H3. Interacts with CBFB. Found in a complex with PRMT5, RUNX1 and CBFB.

It localises to the nucleus. Its function is as follows. Histone-binding protein required for histone H4 methyltransferase activity of PRMT5. Specifically required for histone H4 'Arg-3' methylation mediated by PRMT5, but not histone H3 'Arg-8' methylation, suggesting that it modulates the substrate specificity of PRMT5. Specifically interacts with the N-terminus of histone H4 but not with histone H3, suggesting that it acts by promoting the association between histone H4 and PRMT5. Involved in CCNE1 promoter repression. Plays a role in muscle cell differentiation by modulating the recruitment of PRMT5 to the promoter of genes involved in the coordination between cell cycle exit and muscle differentiation. In Homo sapiens (Human), this protein is Coordinator of PRMT5 and differentiation stimulator (COPRS).